Reading from the N-terminus, the 538-residue chain is Chaperonin GroEL 1 (538 aa).

ATP-binding positions include 29–32 (TLGP), 86–90 (DGTTT), Gly413, and Asp494.

This sequence belongs to the chaperonin (HSP60) family. Forms a cylinder of 14 subunits composed of two heptameric rings stacked back-to-back. Interacts with the co-chaperonin GroES.

The protein resides in the cytoplasm. It catalyses the reaction ATP + H2O + a folded polypeptide = ADP + phosphate + an unfolded polypeptide.. Together with its co-chaperonin GroES, plays an essential role in assisting protein folding. The GroEL-GroES system forms a nano-cage that allows encapsulation of the non-native substrate proteins and provides a physical environment optimized to promote and accelerate protein folding. This Mycobacterium avium (strain 104) protein is Chaperonin GroEL 1.